The sequence spans 504 residues: Histidine ammonia-lyase (504 aa).

A cross-link (5-imidazolinone (Ala-Gly)) is located at residues 142–144 (ASG). Ser-143 is subject to 2,3-didehydroalanine (Ser).

The protein belongs to the PAL/histidase family. Contains an active site 4-methylidene-imidazol-5-one (MIO), which is formed autocatalytically by cyclization and dehydration of residues Ala-Ser-Gly.

It localises to the cytoplasm. It carries out the reaction L-histidine = trans-urocanate + NH4(+). Its pathway is amino-acid degradation; L-histidine degradation into L-glutamate; N-formimidoyl-L-glutamate from L-histidine: step 1/3. The chain is Histidine ammonia-lyase from Staphylococcus aureus (strain bovine RF122 / ET3-1).